We begin with the raw amino-acid sequence, 1382 residues long: Y' element ATP-dependent helicase protein 1 copy 4 (1382 aa).

The Helicase ATP-binding domain occupies 383–560 (EIYMADTPSV…LQRIGLTGLA (178 aa)). ATP is bound at residue 396 to 403 (APPGYGKT). One can recognise a Helicase C-terminal domain in the interval 617-766 (KLLLALFEIE…EFYGLESKKG (150 aa)). Disordered regions lie at residues 840–864 (ANAS…NVRT) and 880–1007 (TTES…DINK). Over residues 880-983 (TTESTNSSTN…ATTTESTNAS (104 aa)) the composition is skewed to low complexity. Residues 984–1007 (AKEDANKDGNAEDNRFHPVTDINK) are compositionally biased toward basic and acidic residues.

Belongs to the helicase family. Yeast subtelomeric Y' repeat subfamily.

Catalyzes DNA unwinding and is involved in telomerase-independent telomere maintenance. The sequence is that of Y' element ATP-dependent helicase protein 1 copy 4 (YRF1-4) from Saccharomyces cerevisiae (strain ATCC 204508 / S288c) (Baker's yeast).